Reading from the N-terminus, the 174-residue chain is Bifunctional protein PyrR (174 aa).

The PRPP-binding motif lies at 97–109 (VVIVDDVLYTGRT).

It belongs to the purine/pyrimidine phosphoribosyltransferase family. PyrR subfamily. In terms of assembly, homodimer and homohexamer; in equilibrium.

It catalyses the reaction UMP + diphosphate = 5-phospho-alpha-D-ribose 1-diphosphate + uracil. Its function is as follows. Regulates transcriptional attenuation of the pyrimidine nucleotide (pyr) operon by binding in a uridine-dependent manner to specific sites on pyr mRNA. This disrupts an antiterminator hairpin in the RNA and favors formation of a downstream transcription terminator, leading to a reduced expression of downstream genes. Functionally, also displays a weak uracil phosphoribosyltransferase activity which is not physiologically significant. The protein is Bifunctional protein PyrR of Macrococcus caseolyticus (strain JCSC5402) (Macrococcoides caseolyticum).